A 335-amino-acid chain; its full sequence is E3 ubiquitin-protein ligase NLA (335 aa).

The SPX domain occupies 1–154 (MKFCKKYEEY…ESRQGQAFKT (154 aa)). The RING-type zinc finger occupies 231–280 (CSICLDTVFDPISLTCGHIYCYMCACSAASVNVVDGLKTAEATEKCPLCR).

Interacts with UBC8. Interacts with PHT1-1 and PHT1-4. Forms homodimers (via RING domain). Interacts with UBC24/PHO2. Interacts with NPF2.13/NRT1.7. Interacts with NAC92/ORE1. High expression in roots and stems, medium in seedlings, flowers, rosette and cauline leaves, and very low in siliques. Detected in cotyledons, hypocotyls, pedicel, receptacle, pistil, sepal, filament of stamen and at the two ends of developing siliques.

The protein localises to the nucleus speckle. The protein resides in the nucleus. It is found in the cell membrane. It catalyses the reaction S-ubiquitinyl-[E2 ubiquitin-conjugating enzyme]-L-cysteine + [acceptor protein]-L-lysine = [E2 ubiquitin-conjugating enzyme]-L-cysteine + N(6)-ubiquitinyl-[acceptor protein]-L-lysine.. It functions in the pathway protein modification; protein ubiquitination. Its function is as follows. E3 ubiquitin-protein ligase that mediates E2-dependent protein ubiquitination. Plays a role in salicylic acid-mediated negative feedback regulation of salicylic acid (SA) accumulation. May be involved in the overall regulation of SA, benzoic acid and phenylpropanoid biosynthesis. Involved in defense response. May act as negative regulator of resistance to the necrotrophic fungal pathogen Plectosphaerella cucumerina by modulating the accumulation of the phytoalexin camalexin and the salicylic acid- and jasmonate- dependent defense pathways. Controls the adaptability to nitrogen limitation by channeling the phenylpropanoid metabolic flux to the induced anthocyanin synthesis. Involved in the regulation of inorganic phosphate (Pi) homeostasis in a nitrate-dependent fashion. Directs the ubiquitination and subsequent degradation of the plasma membrane-localized inorganic phosphate transporters PHT1-1 and PHT1-4, to maintain phosphate homeostasis. The ubiquitination of PHTs triggers their clathrin-dependent endocytosis and trafficking to the vacuole through the endosomal pathway for degradation. Functions cooperatively with UBC24/PHO2 to regulate the abundance of PHT1-1, PHT1-2 and PHT1-3 in different subcellular compartments. Regulates Pi homeostasis by mediating, cooperatively with UBC24/PHO2, polyubiquitination of PHT1-4 and its targeting for degradation. Directs the polyubiquitination and subsequent degradation of the plasma membrane-localized nitrate transporter NPF2.13/NRT1.7, to help plants to adapt to nitrogen deficiency by regulating the source-to-sink remobilization of nitrate. Regulates leaf senescence during nitrogen deficiency by mediating, cooperatively with UBC24/PHO2, polyubiquitination of NAC92/ORE1 and its targeting for degradation. This is E3 ubiquitin-protein ligase NLA from Arabidopsis thaliana (Mouse-ear cress).